Consider the following 1292-residue polypeptide: Kinesin-like protein KIN-12A (1292 aa).

A disordered region spans residues 1–86 (MKKHFTLPRN…LSAETATESG (86 aa)). Positions 19-29 (PHSPNPSISKS) are enriched in low complexity. A compositionally biased stretch (pro residues) spans 62 to 71 (PLPPRPPPSN). The Kinesin motor domain maps to 91–426 (GVKVIVRMKP…LRFAQRAKAI (336 aa)). 165-172 (GQTGSGKT) contacts ATP. 3 microtubules-binding regions span residues 293-297 (SSRSH), 326-332 (VDLAGSE), and 375-379 (HIPYR). A neck region spans residues 424-461 (KAIQNKAVVNEVMQDDVNFLRGVIHQLRDELQRMKNDG). The segment at 677–724 (SVSPTIRNSRKSLKTSELSTASQKDSEGENLVTEAADPSPATSKKMNN) is disordered. Coiled-coil stretches lie at residues 945 to 992 (EVLK…CYID) and 1047 to 1232 (SEEL…NQLV).

The protein belongs to the TRAFAC class myosin-kinesin ATPase superfamily. Kinesin family. KIN-12 subfamily. As to quaternary structure, homodimer and heterodimer with KIN12B. Interacts with TIO.

The protein resides in the cytoplasm. The protein localises to the cytoskeleton. It is found in the phragmoplast. Functionally, plus-end directed kinesin-like motor enzyme that plays a critical role in the organization of phragmoplast microtubules during cytokinesis. Constitutes a signaling module in association with serine/threonine-protein kinase TIO that is required to support phragmoplast expansion and cell-plate growth in plant cells. Binds microtubules in an ATP-sensitive manner. The chain is Kinesin-like protein KIN-12A from Arabidopsis thaliana (Mouse-ear cress).